Reading from the N-terminus, the 185-residue chain is Peptidyl-tRNA hydrolase (185 aa).

Y14 is a binding site for tRNA. The Proton acceptor role is filled by H19. Residues Y65, N67, and N113 each contribute to the tRNA site.

Belongs to the PTH family. Monomer.

It is found in the cytoplasm. The catalysed reaction is an N-acyl-L-alpha-aminoacyl-tRNA + H2O = an N-acyl-L-amino acid + a tRNA + H(+). Its function is as follows. Hydrolyzes ribosome-free peptidyl-tRNAs (with 1 or more amino acids incorporated), which drop off the ribosome during protein synthesis, or as a result of ribosome stalling. Catalyzes the release of premature peptidyl moieties from peptidyl-tRNA molecules trapped in stalled 50S ribosomal subunits, and thus maintains levels of free tRNAs and 50S ribosomes. This Rickettsia africae (strain ESF-5) protein is Peptidyl-tRNA hydrolase.